Consider the following 492-residue polypeptide: NADH-quinone oxidoreductase subunit N 2 (492 aa).

Transmembrane regions (helical) follow at residues 16–36 (ILPEIVLAVFGIVVMMADALI), 44–64 (PLGYLSLIGVLVSLGAIACQA), 87–107 (FSLFFHVLIALITAAVLLVSF), 118–138 (GEYYAIILFSALGMMLMTSAT), 140–160 (LVLIFIALEISSIGSYVLAAM), 175–195 (FLLGSFATAFFLYGVALIFGA), 216–236 (PIIYLAVALMFIGLGFKVAAA), 250–270 (PSPIVALMSTGPKAAAFAVLL), 282–302 (FWIVWVSAALSMTIGNIGALV), 309–329 (LLAYSSIAHAGYMLVAFAAAK), 333–353 (ISAAIFYTATYAAMNVGAFAV), 381–401 (AAILTVFLLSLIGIPVTGGFF), 416–438 (VWLTIIGVINSAVGAYYYLRIIV), and 455–475 (PFGLALALAMCLMFTIYLGVL).

Belongs to the complex I subunit 2 family. NDH-1 is composed of 14 different subunits. Subunits NuoA, H, J, K, L, M, N constitute the membrane sector of the complex.

Its subcellular location is the cell inner membrane. It catalyses the reaction a quinone + NADH + 5 H(+)(in) = a quinol + NAD(+) + 4 H(+)(out). Functionally, NDH-1 shuttles electrons from NADH, via FMN and iron-sulfur (Fe-S) centers, to quinones in the respiratory chain. The immediate electron acceptor for the enzyme in this species is believed to be ubiquinone. Couples the redox reaction to proton translocation (for every two electrons transferred, four hydrogen ions are translocated across the cytoplasmic membrane), and thus conserves the redox energy in a proton gradient. The sequence is that of NADH-quinone oxidoreductase subunit N 2 from Koribacter versatilis (strain Ellin345).